A 195-amino-acid chain; its full sequence is Imidazole glycerol phosphate synthase subunit HisH (195 aa).

One can recognise a Glutamine amidotransferase type-1 domain in the interval 1-195 (MIAVVDLGIG…LRLLENFRRL (195 aa)). Residue cysteine 72 is the Nucleophile of the active site. Catalysis depends on residues histidine 177 and glutamate 179.

Heterodimer of HisH and HisF.

The protein localises to the cytoplasm. It carries out the reaction 5-[(5-phospho-1-deoxy-D-ribulos-1-ylimino)methylamino]-1-(5-phospho-beta-D-ribosyl)imidazole-4-carboxamide + L-glutamine = D-erythro-1-(imidazol-4-yl)glycerol 3-phosphate + 5-amino-1-(5-phospho-beta-D-ribosyl)imidazole-4-carboxamide + L-glutamate + H(+). The catalysed reaction is L-glutamine + H2O = L-glutamate + NH4(+). Its pathway is amino-acid biosynthesis; L-histidine biosynthesis; L-histidine from 5-phospho-alpha-D-ribose 1-diphosphate: step 5/9. Functionally, IGPS catalyzes the conversion of PRFAR and glutamine to IGP, AICAR and glutamate. The HisH subunit catalyzes the hydrolysis of glutamine to glutamate and ammonia as part of the synthesis of IGP and AICAR. The resulting ammonia molecule is channeled to the active site of HisF. The sequence is that of Imidazole glycerol phosphate synthase subunit HisH from Thermococcus kodakarensis (strain ATCC BAA-918 / JCM 12380 / KOD1) (Pyrococcus kodakaraensis (strain KOD1)).